A 250-amino-acid polypeptide reads, in one-letter code: MSFTVIIPARLASTRLPNKPLADLGGKPMIVRVAERAMESGASRVIVATDHADIFAACAQNNVAVQMTRTDHPSGTDRIAEVAAVLGLSDDAVIVNVQGDEPLIDPSLIAATATLISREVPMATAAHTIDDIADAFNPNVVKVVLDKQGRALYFSRATIPWHRDGFAQSREQLPTAYAPLRHIGLYAYRNSFLQAYPQLAVSPLEQIEALEQLRVLWHGVPIAVHVTPHAPAAGVDTPEDLLRVRRYFTQ.

It belongs to the KdsB family.

Its subcellular location is the cytoplasm. The catalysed reaction is 3-deoxy-alpha-D-manno-oct-2-ulosonate + CTP = CMP-3-deoxy-beta-D-manno-octulosonate + diphosphate. It functions in the pathway nucleotide-sugar biosynthesis; CMP-3-deoxy-D-manno-octulosonate biosynthesis; CMP-3-deoxy-D-manno-octulosonate from 3-deoxy-D-manno-octulosonate and CTP: step 1/1. It participates in bacterial outer membrane biogenesis; lipopolysaccharide biosynthesis. In terms of biological role, activates KDO (a required 8-carbon sugar) for incorporation into bacterial lipopolysaccharide in Gram-negative bacteria. The polypeptide is 3-deoxy-manno-octulosonate cytidylyltransferase (Herminiimonas arsenicoxydans).